A 193-amino-acid polypeptide reads, in one-letter code: Thymidine kinase (193 aa).

Residue 9–16 (AAMNAGKS) participates in ATP binding.

Belongs to the thymidine kinase family.

The catalysed reaction is thymidine + ATP = dTMP + ADP + H(+). In terms of biological role, this thymidine kinase is one of the enzymes that catalyze DNA precursor synthesis. Although tk is a nonessential gene, some strains of host E.coli do not support the growth of phages that lack this gene. The protein is Thymidine kinase (TK) of Escherichia coli (Bacteriophage T4).